The following is a 370-amino-acid chain: GTPase Obg (370 aa).

In terms of domain architecture, Obg spans 1–159 (MKFIDEARIE…RKLKLELKVL (159 aa)). Residues 129-148 (HFKSSTNRAPRQKTNGKSGE) are disordered. Over residues 130–145 (FKSSTNRAPRQKTNGK) the composition is skewed to polar residues. One can recognise an OBG-type G domain in the interval 160–334 (ADVGLLGMPN…LCYSLQDYLD (175 aa)). GTP contacts are provided by residues 166–173 (GMPNAGKS), 191–195 (FTTLH), 213–216 (DIPG), 284–287 (NKVD), and 315–317 (SAL). 2 residues coordinate Mg(2+): serine 173 and threonine 193.

It belongs to the TRAFAC class OBG-HflX-like GTPase superfamily. OBG GTPase family. In terms of assembly, monomer. It depends on Mg(2+) as a cofactor.

Its subcellular location is the cytoplasm. Functionally, an essential GTPase which binds GTP, GDP and possibly (p)ppGpp with moderate affinity, with high nucleotide exchange rates and a fairly low GTP hydrolysis rate. Plays a role in control of the cell cycle, stress response, ribosome biogenesis and in those bacteria that undergo differentiation, in morphogenesis control. The sequence is that of GTPase Obg from Polynucleobacter necessarius subsp. necessarius (strain STIR1).